We begin with the raw amino-acid sequence, 238 residues long: Epoxyqueuosine reductase QueH (238 aa).

4 residues coordinate [4Fe-4S] cluster: Cys43, Cys44, Cys129, and Cys132. Residues Cys211 and Cys213 are joined by a disulfide bond.

Belongs to the QueH family.

The enzyme catalyses epoxyqueuosine(34) in tRNA + AH2 = queuosine(34) in tRNA + A + H2O. Its pathway is tRNA modification; tRNA-queuosine biosynthesis. Functionally, catalyzes the conversion of epoxyqueuosine (oQ) to queuosine (Q), which is a hypermodified base found in the wobble positions of tRNA(Asp), tRNA(Asn), tRNA(His) and tRNA(Tyr). This Staphylococcus epidermidis (strain ATCC 12228 / FDA PCI 1200) protein is Epoxyqueuosine reductase QueH.